The sequence spans 219 residues: Adenylate kinase (219 aa).

13 to 18 (GAGKGT) serves as a coordination point for ATP. Residues 33-62 (STGDIFRAAIKNETKMGLEAKKYIDAGNLV) form an NMP region. Residues threonine 34, arginine 39, 60–62 (NLV), 88–91 (GYPR), and glutamine 95 each bind AMP. The interval 129–167 (GRFICRTCGATYHKLYNKPKVEGTCDVCGGHDFYQRDDD) is LID. Arginine 130 lines the ATP pocket. 2 residues coordinate Zn(2+): cysteine 133 and cysteine 136. 139–140 (TY) contacts ATP. Residues cysteine 153 and cysteine 156 each coordinate Zn(2+). The AMP site is built by arginine 164 and arginine 175. Arginine 203 contributes to the ATP binding site.

It belongs to the adenylate kinase family. As to quaternary structure, monomer.

It localises to the cytoplasm. The catalysed reaction is AMP + ATP = 2 ADP. It participates in purine metabolism; AMP biosynthesis via salvage pathway; AMP from ADP: step 1/1. Functionally, catalyzes the reversible transfer of the terminal phosphate group between ATP and AMP. Plays an important role in cellular energy homeostasis and in adenine nucleotide metabolism. The protein is Adenylate kinase of Lactiplantibacillus plantarum (strain ATCC BAA-793 / NCIMB 8826 / WCFS1) (Lactobacillus plantarum).